Here is a 271-residue protein sequence, read N- to C-terminus: 4-hydroxy-tetrahydrodipicolinate reductase (271 aa).

Residues 10-15, glutamate 36, 100-102, and 124-127 each bind NAD(+); these read GAGGRM, GTT, and SGNM. Catalysis depends on histidine 157, which acts as the Proton donor/acceptor. Histidine 158 provides a ligand contact to (S)-2,3,4,5-tetrahydrodipicolinate. The active-site Proton donor is the lysine 161. (S)-2,3,4,5-tetrahydrodipicolinate is bound at residue 167–168; the sequence is GT.

Belongs to the DapB family.

Its subcellular location is the cytoplasm. The enzyme catalyses (S)-2,3,4,5-tetrahydrodipicolinate + NAD(+) + H2O = (2S,4S)-4-hydroxy-2,3,4,5-tetrahydrodipicolinate + NADH + H(+). It catalyses the reaction (S)-2,3,4,5-tetrahydrodipicolinate + NADP(+) + H2O = (2S,4S)-4-hydroxy-2,3,4,5-tetrahydrodipicolinate + NADPH + H(+). Its pathway is amino-acid biosynthesis; L-lysine biosynthesis via DAP pathway; (S)-tetrahydrodipicolinate from L-aspartate: step 4/4. Functionally, catalyzes the conversion of 4-hydroxy-tetrahydrodipicolinate (HTPA) to tetrahydrodipicolinate. This chain is 4-hydroxy-tetrahydrodipicolinate reductase, found in Rhodopseudomonas palustris (strain HaA2).